The chain runs to 548 residues: Glycosyl hydrolase family 109 protein 3 (548 aa).

Residues 1–21 form the signal peptide; the sequence is MKLKKLLLSVLMLLSISGLQA. Residues 71-72, D93, 141-144, 161-162, and N190 contribute to the NAD(+) site; these read MR, WNHH, and EV. Position 219 (Y219) interacts with substrate. 240–244 contributes to the NAD(+) binding site; that stretch reads DNLHW. Substrate is bound by residues R245, 257–260, and Y335; that span reads YATH. Position 257 (Y257) interacts with NAD(+).

The protein belongs to the Gfo/Idh/MocA family. Glycosyl hydrolase 109 subfamily. NAD(+) serves as cofactor.

In terms of biological role, glycosidase. The sequence is that of Glycosyl hydrolase family 109 protein 3 from Phocaeicola vulgatus (strain ATCC 8482 / DSM 1447 / JCM 5826 / CCUG 4940 / NBRC 14291 / NCTC 11154) (Bacteroides vulgatus).